Here is a 158-residue protein sequence, read N- to C-terminus: Cyclic pyranopterin monophosphate synthase (158 aa).

Substrate contacts are provided by residues 75-77 (LCH) and 113-114 (ME). Aspartate 128 is an active-site residue.

This sequence belongs to the MoaC family. Homohexamer; trimer of dimers.

The enzyme catalyses (8S)-3',8-cyclo-7,8-dihydroguanosine 5'-triphosphate = cyclic pyranopterin phosphate + diphosphate. Its pathway is cofactor biosynthesis; molybdopterin biosynthesis. Functionally, catalyzes the conversion of (8S)-3',8-cyclo-7,8-dihydroguanosine 5'-triphosphate to cyclic pyranopterin monophosphate (cPMP). This Ralstonia pickettii (strain 12J) protein is Cyclic pyranopterin monophosphate synthase.